Here is a 403-residue protein sequence, read N- to C-terminus: Keratin, type I cytoskeletal 19 (403 aa).

The tract at residues M1 to N82 is head. Residue R7 is modified to Omega-N-methylarginine. Phosphoserine is present on S14. The residue at position 24 (R24) is an Asymmetric dimethylarginine; alternate. R24 carries the post-translational modification Omega-N-methylarginine; alternate. S27 is modified (phosphoserine). R32 is subject to Omega-N-methylarginine. S35 and S40 each carry phosphoserine. 2 positions are modified to omega-N-methylarginine: R43 and R51. A phosphoserine mark is found at S57 and S67. The interval E83–W118 is coil 1A. An IF rod domain is found at E83 to Y394. Positions Y119–T136 are linker 1. The coil 1B stretch occupies residues I137–L228. The segment at R229–I251 is linker 12. The necessary for interaction with PNN stretch occupies residues D247–H393. The segment at L252–Q390 is coil 2. At T326 the chain carries Phosphothreonine. The rod-like helical tail stretch occupies residues E391–L403. Y394 carries the phosphotyrosine modification. The residue at position 398 (S398) is a Phosphoserine.

This sequence belongs to the intermediate filament family. As to quaternary structure, heterotetramer of two type I and two type II keratins. Interacts with PNN. Interacts with the actin-binding domain of DMD. As to expression, expressed in brain, heart, skin and in costameres of myoplasm at the sarcolemmal membrane in skeletal and cardiac muscle fibers. Undifferentiated gonads and somatic cells of ovarian cords throughout the fetal ovary development.

Functionally, involved in the organization of myofibers. Together with KRT8, helps to link the contractile apparatus to dystrophin at the costameres of striated muscle. The protein is Keratin, type I cytoskeletal 19 (Krt19) of Rattus norvegicus (Rat).